Consider the following 382-residue polypeptide: Ribosomal RNA large subunit methyltransferase G (382 aa).

This sequence belongs to the methyltransferase superfamily. RlmG family.

It localises to the cytoplasm. It carries out the reaction guanosine(1835) in 23S rRNA + S-adenosyl-L-methionine = N(2)-methylguanosine(1835) in 23S rRNA + S-adenosyl-L-homocysteine + H(+). Functionally, specifically methylates the guanine in position 1835 (m2G1835) of 23S rRNA. This Aliivibrio salmonicida (strain LFI1238) (Vibrio salmonicida (strain LFI1238)) protein is Ribosomal RNA large subunit methyltransferase G.